We begin with the raw amino-acid sequence, 146 residues long: Probable calcium-binding protein CML32 (146 aa).

EF-hand domains follow at residues 1 to 33 (MSVA…FSPS), 34 to 69 (ITSE…GGEG), 73 to 108 (DEDI…LGEK), and 109 to 144 (QTIA…NNKK). Ca(2+)-binding residues include Asp11, Asn13, Asp15, Lys17, Glu22, Asp47, Asp49, Asp51, Gln53, Glu58, Asp86, Asp88, Asp90, Lys92, Glu97, Asp122, Asp124, Asp126, and Glu133.

Potential calcium sensor. This is Probable calcium-binding protein CML32 (CML32) from Arabidopsis thaliana (Mouse-ear cress).